The following is a 114-amino-acid chain: Hydrogenase maturation factor HypA (114 aa).

Residue His-2 participates in Ni(2+) binding. Residues Cys-73, Cys-76, Cys-89, and Cys-92 each contribute to the Zn(2+) site.

It belongs to the HypA/HybF family.

Its function is as follows. Involved in the maturation of [NiFe] hydrogenases. Required for nickel insertion into the metal center of the hydrogenase. The polypeptide is Hydrogenase maturation factor HypA (Syntrophus aciditrophicus (strain SB)).